We begin with the raw amino-acid sequence, 293 residues long: Probable tRNA-splicing endonuclease subunit Sen2 (293 aa).

Active-site residues include Tyr-157, His-165, and Lys-204. A helical transmembrane segment spans residues 267-287; it reads VVFNHWGVILGFTVLSGLLVY.

The protein belongs to the tRNA-intron endonuclease family. As to quaternary structure, tRNA splicing endonuclease is a heterotetramer composed of SEN2, SEN15, SEN34/LENG5 and SEN54.

The protein resides in the nucleus. It localises to the membrane. The catalysed reaction is pretRNA = a 3'-half-tRNA molecule with a 5'-OH end + a 5'-half-tRNA molecule with a 2',3'-cyclic phosphate end + an intron with a 2',3'-cyclic phosphate and a 5'-hydroxyl terminus.. Functionally, constitutes one of the two catalytic subunit of the tRNA-splicing endonuclease complex, a complex responsible for identification and cleavage of the splice sites in pre-tRNA. It cleaves pre-tRNA at the 5'- and 3'-splice sites to release the intron. The products are an intron and two tRNA half-molecules bearing 2',3'-cyclic phosphate and 5'-OH termini. There are no conserved sequences at the splice sites, but the intron is invariably located at the same site in the gene, placing the splice sites an invariant distance from the constant structural features of the tRNA body. Probably carries the active site for 5'-splice site cleavage. This chain is Probable tRNA-splicing endonuclease subunit Sen2, found in Oryza sativa subsp. japonica (Rice).